The following is a 252-amino-acid chain: Phosphate import ATP-binding protein PstB (252 aa).

One can recognise an ABC transporter domain in the interval 5–247; that stretch reads MRGQDVKVFY…PKEQRTQDYI (243 aa). 37-44 lines the ATP pocket; it reads GPSGCGKS.

The protein belongs to the ABC transporter superfamily. Phosphate importer (TC 3.A.1.7) family. In terms of assembly, the complex is composed of two ATP-binding proteins (PstB), two transmembrane proteins (PstC and PstA) and a solute-binding protein (PstS).

It localises to the cell inner membrane. The enzyme catalyses phosphate(out) + ATP + H2O = ADP + 2 phosphate(in) + H(+). Its function is as follows. Part of the ABC transporter complex PstSACB involved in phosphate import. Responsible for energy coupling to the transport system. In Bartonella quintana (strain Toulouse) (Rochalimaea quintana), this protein is Phosphate import ATP-binding protein PstB.